The following is a 345-amino-acid chain: Eukaryotic translation initiation factor 3 subunit F (345 aa).

The MPN domain maps to 30-166 (VVIQPQAIFS…TRAYISAPVG (137 aa)). The segment at 308–345 (GGESGGAESGAQRGQRGGKGGRGGQQRNQERGAEEARA) is disordered. Over residues 322 to 331 (QRGGKGGRGG) the composition is skewed to gly residues. The span at 335-345 (NQERGAEEARA) shows a compositional bias: basic and acidic residues.

This sequence belongs to the eIF-3 subunit F family. Component of the eukaryotic translation initiation factor 3 (eIF-3) complex.

Its subcellular location is the cytoplasm. Its function is as follows. Component of the eukaryotic translation initiation factor 3 (eIF-3) complex, which is involved in protein synthesis of a specialized repertoire of mRNAs and, together with other initiation factors, stimulates binding of mRNA and methionyl-tRNAi to the 40S ribosome. The eIF-3 complex specifically targets and initiates translation of a subset of mRNAs involved in cell proliferation. This is Eukaryotic translation initiation factor 3 subunit F from Aspergillus clavatus (strain ATCC 1007 / CBS 513.65 / DSM 816 / NCTC 3887 / NRRL 1 / QM 1276 / 107).